A 452-amino-acid polypeptide reads, in one-letter code: tRNA modification GTPase MnmE (452 aa).

(6S)-5-formyl-5,6,7,8-tetrahydrofolate-binding residues include arginine 21, glutamate 78, and lysine 118. In terms of domain architecture, TrmE-type G spans 214 to 375; it reads GMKVVIAGRP…LREHLKQAMG (162 aa). Asparagine 224 provides a ligand contact to K(+). GTP contacts are provided by residues 224–229, 243–249, and 268–271; these read NAGKSS, TDIAGTT, and DTAG. A Mg(2+)-binding site is contributed by serine 228. K(+) is bound by residues threonine 243, isoleucine 245, and threonine 248. Threonine 249 is a binding site for Mg(2+). Lysine 452 is a (6S)-5-formyl-5,6,7,8-tetrahydrofolate binding site.

It belongs to the TRAFAC class TrmE-Era-EngA-EngB-Septin-like GTPase superfamily. TrmE GTPase family. Homodimer. Heterotetramer of two MnmE and two MnmG subunits. K(+) is required as a cofactor.

Its subcellular location is the cytoplasm. Functionally, exhibits a very high intrinsic GTPase hydrolysis rate. Involved in the addition of a carboxymethylaminomethyl (cmnm) group at the wobble position (U34) of certain tRNAs, forming tRNA-cmnm(5)s(2)U34. The protein is tRNA modification GTPase MnmE of Haemophilus influenzae (strain ATCC 51907 / DSM 11121 / KW20 / Rd).